The sequence spans 193 residues: Ribosomal RNA large subunit methyltransferase E (193 aa).

S-adenosyl-L-methionine-binding residues include Gly49, Phe51, Asp69, Asp86, and Asp106. Residue Lys146 is the Proton acceptor of the active site.

Belongs to the class I-like SAM-binding methyltransferase superfamily. RNA methyltransferase RlmE family.

It is found in the cytoplasm. It catalyses the reaction uridine(2552) in 23S rRNA + S-adenosyl-L-methionine = 2'-O-methyluridine(2552) in 23S rRNA + S-adenosyl-L-homocysteine + H(+). Functionally, specifically methylates the uridine in position 2552 of 23S rRNA at the 2'-O position of the ribose in the fully assembled 50S ribosomal subunit. This chain is Ribosomal RNA large subunit methyltransferase E, found in Brachyspira hyodysenteriae (strain ATCC 49526 / WA1).